The sequence spans 640 residues: F-box only protein 43 (640 aa).

Residue T176 is modified to Phosphothreonine. S275 carries the post-translational modification Phosphoserine. Positions L328–Q354 are disordered. In terms of domain architecture, F-box spans M423–K480. The ZBR-type zinc-finger motif lies at A568–G616. Positions 572, 575, 590, 595, 600, 603, 608, and 613 each coordinate Zn(2+). The interval R615–L640 is disordered.

Part of a SCF (SKP1-cullin-F-box) protein ligase complex. Interaction with SKP1 does not occur. Interacts with ANAPC2; the interaction is direct, ANAPC4, CDC16, CDC23; the interaction is direct, ANAPC10; the interaction is direct and CDC26, during spermatogenesis. Interacts with CDC20. In terms of processing, phosphorylated on Thr-176 and Ser-275 in response to calcium, which is a prerequisite for ubiquitination and proteasomal degradation. Post-translationally, ubiquitinated in response to calcium, which promotes proteasomal degradation. As to expression, present in testis and ovary (at protein level). Expression is high in immature oocytes, and diminishes after oocyte activation. Expressed post-meiotically in spermatids and sperm.

It participates in protein modification; protein ubiquitination. In terms of biological role, required to establish and maintain the arrest of oocytes at the second meiotic metaphase until fertilization. Acts by inhibiting the anaphase-promoting complex/cyclosome (APC/C) ubiquitin ligase. Probably recognizes and binds to some phosphorylated proteins and promotes their ubiquitination and degradation. Plays a vital role in modulating the ubiquitilation of CCNB1 and CDK1 during gametogenesis. The protein is F-box only protein 43 (Fbxo43) of Mus musculus (Mouse).